The following is a 591-amino-acid chain: N-acetylgalactosaminyltransferase 7 (591 aa).

Over 1 to 11 (MRVSTIRSGRI) the chain is Cytoplasmic. Residues 12 to 29 (CRLALCLLVLLPLLYLLA) form a helical; Signal-anchor for type II membrane protein membrane-spanning segment. A glycan (N-linked (GlcNAc...) asparagine) is linked at Asn30. Residues 30–591 (NWSDHHKRVQ…WWFKEIRPRW (562 aa)) are Lumenal-facing. Residues 68-100 (DGLGNFEPKDVKPRSGPGENGEAHSLSPDKKHM) are disordered. 5 cysteine pairs are disulfide-bonded: Cys132/Cys367, Cys358/Cys441, Cys479/Cys496, Cys519/Cys532, and Cys558/Cys573. A catalytic subdomain A region spans residues 141–251 (LPRTSVIIVF…TNWLPPLLAP (111 aa)). The substrate site is built by Asp182 and Arg212. 2 residues coordinate Mn(2+): Asp235 and His237. The tract at residues 313-375 (PYRSPTHAGG…PCSRVGHVYR (63 aa)) is catalytic subdomain B. Position 344 (Trp344) interacts with substrate. His372 is a binding site for Mn(2+). Positions 375 and 380 each coordinate substrate. The region spanning 466-585 (LHWGELRSVA…NDSYQQWWFK (120 aa)) is the Ricin B-type lectin domain. Residue Asn576 is glycosylated (N-linked (GlcNAc...) asparagine).

The protein belongs to the glycosyltransferase 2 family. GalNAc-T subfamily. Requires Mn(2+) as cofactor. Expressed in developing oocytes and egg chambers. During embryonic stages 9-11, expressed in the primordium of the foregut, midgut and hindgut. Expressed in the salivary glands from embryonic stage 12 onwards. During embryonic stages 12-13, expressed in the posterior midgut and hindgut. During embryonic stages 14-15, expression continues in the hindgut. During embryonic stages 16-17, expressed in the antennomaxillary complex. In third instar larvae, ubiquitously expressed in wing, with increased expression in the notum and ventral wing pouch, eye-antennal, leg and haltere imaginal disks.

The protein localises to the golgi apparatus membrane. The enzyme catalyses L-seryl-[protein] + UDP-N-acetyl-alpha-D-galactosamine = a 3-O-[N-acetyl-alpha-D-galactosaminyl]-L-seryl-[protein] + UDP + H(+). The catalysed reaction is L-threonyl-[protein] + UDP-N-acetyl-alpha-D-galactosamine = a 3-O-[N-acetyl-alpha-D-galactosaminyl]-L-threonyl-[protein] + UDP + H(+). The protein operates within protein modification; protein glycosylation. Glycopeptide transferase involved in O-linked oligosaccharide biosynthesis, which catalyzes the transfer of an N-acetyl-D-galactosamine residue to an already glycosylated peptide. In contrast to other proteins of the family, it does not act as a peptide transferase that transfers GalNAc onto serine or threonine residue on the protein receptor, but instead requires the prior addition of a GalNAc on a peptide before adding additional GalNAc moieties. Some peptide transferase activity is however not excluded, considering that its appropriate peptide substrate may remain unidentified. Prefers the monoglycosylated Muc5AC-3 as substrate. Might have a role in protein O-glycosylation in the Golgi and thereby in establishing and/or maintaining a proper secretory apparatus structure. The protein is N-acetylgalactosaminyltransferase 7 of Drosophila melanogaster (Fruit fly).